Here is a 256-residue protein sequence, read N- to C-terminus: 1-(5-phosphoribosyl)-5-[(5-phosphoribosylamino)methylideneamino] imidazole-4-carboxamide isomerase (256 aa).

Asp8 serves as the catalytic Proton acceptor. Asp130 serves as the catalytic Proton donor.

The protein belongs to the HisA/HisF family.

It is found in the cytoplasm. The enzyme catalyses 1-(5-phospho-beta-D-ribosyl)-5-[(5-phospho-beta-D-ribosylamino)methylideneamino]imidazole-4-carboxamide = 5-[(5-phospho-1-deoxy-D-ribulos-1-ylimino)methylamino]-1-(5-phospho-beta-D-ribosyl)imidazole-4-carboxamide. It participates in amino-acid biosynthesis; L-histidine biosynthesis; L-histidine from 5-phospho-alpha-D-ribose 1-diphosphate: step 4/9. The sequence is that of 1-(5-phosphoribosyl)-5-[(5-phosphoribosylamino)methylideneamino] imidazole-4-carboxamide isomerase from Pelodictyon phaeoclathratiforme (strain DSM 5477 / BU-1).